We begin with the raw amino-acid sequence, 534 residues long: Cytochrome P450 78A9 (534 aa).

Residues 26–46 traverse the membrane as a helical segment; the sequence is LALSLLVASLASLALSLFFWS. Cys-474 provides a ligand contact to heme.

This sequence belongs to the cytochrome P450 family. Heme is required as a cofactor. As to expression, expressed in the funiculus of developing ovules.

Its subcellular location is the membrane. Its function is as follows. Plays a role in seed and fruit development. Functions probably in association with CYP78A6 in the regulation of seed growth. The protein is Cytochrome P450 78A9 (CYP78A9) of Arabidopsis thaliana (Mouse-ear cress).